The sequence spans 340 residues: Glyceraldehyde-3-phosphate dehydrogenase (340 aa).

Residues Thr11–Ile12 and Gly109 contribute to the NAD(+) site. Ser138–Asn140 contributes to the D-glyceraldehyde 3-phosphate binding site. The active-site Nucleophile is Cys139. Arg167 contributes to the NAD(+) binding site. His193–Ala194 lines the D-glyceraldehyde 3-phosphate pocket. Position 300 (Gln300) interacts with NAD(+).

The protein belongs to the glyceraldehyde-3-phosphate dehydrogenase family. Homotetramer.

It localises to the cytoplasm. It catalyses the reaction D-glyceraldehyde 3-phosphate + phosphate + NADP(+) = (2R)-3-phospho-glyceroyl phosphate + NADPH + H(+). It carries out the reaction D-glyceraldehyde 3-phosphate + phosphate + NAD(+) = (2R)-3-phospho-glyceroyl phosphate + NADH + H(+). It participates in carbohydrate degradation; glycolysis; pyruvate from D-glyceraldehyde 3-phosphate: step 1/5. This chain is Glyceraldehyde-3-phosphate dehydrogenase, found in Metallosphaera sedula (strain ATCC 51363 / DSM 5348 / JCM 9185 / NBRC 15509 / TH2).